A 198-amino-acid chain; its full sequence is Recombination protein RecR (198 aa).

A C4-type zinc finger spans residues Cys57–Cys72. The region spanning Ser80 to Pro175 is the Toprim domain.

This sequence belongs to the RecR family.

Functionally, may play a role in DNA repair. It seems to be involved in an RecBC-independent recombinational process of DNA repair. It may act with RecF and RecO. The polypeptide is Recombination protein RecR (Listeria monocytogenes serotype 4b (strain CLIP80459)).